We begin with the raw amino-acid sequence, 302 residues long: Gap junction delta-2 protein (302 aa).

At 1-19 (MGEWTILERLLEAAVQQHS) the chain is on the cytoplasmic side. The chain crosses the membrane as a helical span at residues 20 to 42 (TMIGRILLTVVVIFRILVVAIVG). Residues 43 to 75 (ETVYDDEQTMFVCNTLQPGCNQACYDKAFPISH) are Extracellular-facing. Residues 76-98 (IRYWVFQIIMVCTPSLCFITYSV) traverse the membrane as a helical segment. The Cytoplasmic segment spans residues 99-177 (HQSSKQRERQ…KIRRQEGISR (79 aa)). Residues 178–200 (FYIIQVVFRNALEIGFLMGQYFL) form a helical membrane-spanning segment. Topologically, residues 201–232 (YGFKVPSMYECNRYPCVKMVECYVSRPTEKTV) are extracellular. A helical transmembrane segment spans residues 233–255 (FLVFMFAVSGLCVILNLAELNHL). The Cytoplasmic portion of the chain corresponds to 256-302 (GWRKIKTAVRGAQERRKSIYEIRNKDSPHRIGVPNFGRTQSSDSAYV).

Belongs to the connexin family. Delta-type subfamily. In terms of assembly, a connexon is composed of a hexamer of connexins. As to expression, retinal specific.

Its subcellular location is the cell membrane. It is found in the cell junction. The protein resides in the gap junction. Its function is as follows. One gap junction consists of a cluster of closely packed pairs of transmembrane channels, the connexons, through which materials of low MW diffuse from one cell to a neighboring cell. The sequence is that of Gap junction delta-2 protein from Leucoraja erinaceus (Little skate).